A 1187-amino-acid chain; its full sequence is RNA helicase Mov10l1 (1187 aa).

The tract at residues 273–347 (RSKSCPGAAA…EPEPGGLIPP (75 aa)) is disordered. 2 stretches are compositionally biased toward basic and acidic residues: residues 296–307 (HHREDKTDEIPE) and 322–339 (ACKEESREKGNTPEKQEP). A run of 5 repeats spans residues 642 to 652 (TRNDSQSITNI), 653 to 663 (IRNDGQSITNV), 664 to 674 (TRNDGQPITKV), 675 to 685 (TRNNSQSITNI), and 686 to 696 (TRNDGQPITKN). The interval 642–696 (TRNDSQSITNIIRNDGQSITNVTRNDGQPITKVTRNNSQSITNITRNDGQPITKN) is 5 X 11 AA tandem repeats of [TI]-R-N-[DN]-[GS]-Q-[SP]-I-T-[NK]-[IVN]. Residues 686–727 (TRNDGQPITKNKKTVKDQTKHTTEERHVGTTDQPEKASSTAE) are disordered. The segment covering 699-720 (TVKDQTKHTTEERHVGTTDQPE) has biased composition (basic and acidic residues). Residue 772–779 (GPPGTGKT) participates in ATP binding. The short motif at 888–891 (DEAG) is the DEAG box element.

Belongs to the DNA2/NAM7 helicase family. SDE3 subfamily. Interacts with PIWIL1. Interacts with PIWIL2. Interacts with PIWIL4. Interacts with HSPA2. Interacts with PLD6. As to expression, isoform 1: Specifically expressed in testis. Isoform 1: In testis, present in pachytene spermatocytes but absent in postmeiotic spermatids (at protein level). Isoform 2: Present in cardiomyocytes (at protein level). Isoform 2: Heart specific. Isoform 3: Heart specific and is specifically expressed in cardiac myocytes.

It is found in the cytoplasm. It carries out the reaction ATP + H2O = ADP + phosphate + H(+). In terms of biological role, ATP-dependent RNA helicase required during spermatogenesis to repress transposable elements and prevent their mobilization, which is essential for germline integrity. Acts via the piRNA metabolic process, which mediates the repression of transposable elements during meiosis by forming complexes composed of piRNAs and Piwi proteins and governs the methylation and subsequent repression of transposons. Involved in the primary piRNA metabolic process. Specifically binds to piRNA precursors and promotes the generation of intermediate piRNA processing fragments that are subsequently loaded to Piwi proteins. Acts via its ATP-dependent RNA helicase activity: displays 5'-3' RNA unwinding activity and probably mediates unwinding and funneling of single-stranded piRNA precursor transcripts to the endonuclease that catalyzes the first cleavage step of piRNA processing to generate piRNA intermediate fragments that are subsequently loaded to Piwi proteins. May act downstream of MEF2C during heart formation. Acts as a cardiac-specific suppressor of cardiomyocyte hypertrophy and cell cycle progression, suggesting that it may suppress these processes through the regulation of CDKN1A. Such results however require additional evidence. The chain is RNA helicase Mov10l1 from Mus musculus (Mouse).